A 470-amino-acid chain; its full sequence is Serine--tRNA ligase (470 aa).

Residue 272–274 coordinates L-serine; the sequence is TAE. Residue 303 to 305 coordinates ATP; it reads RAE. Residue Glu326 coordinates L-serine. 393-396 provides a ligand contact to ATP; it reads EISS. Ser428 lines the L-serine pocket.

Belongs to the class-II aminoacyl-tRNA synthetase family. Type-1 seryl-tRNA synthetase subfamily. As to quaternary structure, homodimer. The tRNA molecule binds across the dimer.

It localises to the cytoplasm. The enzyme catalyses tRNA(Ser) + L-serine + ATP = L-seryl-tRNA(Ser) + AMP + diphosphate + H(+). The catalysed reaction is tRNA(Sec) + L-serine + ATP = L-seryl-tRNA(Sec) + AMP + diphosphate + H(+). The protein operates within aminoacyl-tRNA biosynthesis; selenocysteinyl-tRNA(Sec) biosynthesis; L-seryl-tRNA(Sec) from L-serine and tRNA(Sec): step 1/1. Its function is as follows. Catalyzes the attachment of serine to tRNA(Ser). Is also able to aminoacylate tRNA(Sec) with serine, to form the misacylated tRNA L-seryl-tRNA(Sec), which will be further converted into selenocysteinyl-tRNA(Sec). This chain is Serine--tRNA ligase, found in Nitrobacter hamburgensis (strain DSM 10229 / NCIMB 13809 / X14).